We begin with the raw amino-acid sequence, 433 residues long: Phosphomethylpyrimidine synthase (433 aa).

Substrate is bound by residues asparagine 68, methionine 97, tyrosine 126, histidine 162, 184 to 186 (SRG), 225 to 228 (DALR), and glutamate 264. Histidine 268 contacts Zn(2+). Position 291 (tyrosine 291) interacts with substrate. Residue histidine 332 coordinates Zn(2+). [4Fe-4S] cluster is bound by residues cysteine 408, cysteine 411, and cysteine 415.

Belongs to the ThiC family. Requires [4Fe-4S] cluster as cofactor.

It carries out the reaction 5-amino-1-(5-phospho-beta-D-ribosyl)imidazole + S-adenosyl-L-methionine = 4-amino-2-methyl-5-(phosphooxymethyl)pyrimidine + CO + 5'-deoxyadenosine + formate + L-methionine + 3 H(+). It functions in the pathway cofactor biosynthesis; thiamine diphosphate biosynthesis. Catalyzes the synthesis of the hydroxymethylpyrimidine phosphate (HMP-P) moiety of thiamine from aminoimidazole ribotide (AIR) in a radical S-adenosyl-L-methionine (SAM)-dependent reaction. In Fusobacterium nucleatum subsp. nucleatum (strain ATCC 25586 / DSM 15643 / BCRC 10681 / CIP 101130 / JCM 8532 / KCTC 2640 / LMG 13131 / VPI 4355), this protein is Phosphomethylpyrimidine synthase.